A 101-amino-acid chain; its full sequence is Small ribosomal subunit protein uS14 (101 aa).

A disordered region spans residues 1 to 20 (MAKTSAVEKNKRRRKLVANH). Residues 10-20 (NKRRRKLVANH) are compositionally biased toward basic residues.

The protein belongs to the universal ribosomal protein uS14 family. In terms of assembly, part of the 30S ribosomal subunit. Contacts proteins S3 and S10.

In terms of biological role, binds 16S rRNA, required for the assembly of 30S particles and may also be responsible for determining the conformation of the 16S rRNA at the A site. The protein is Small ribosomal subunit protein uS14 of Sinorhizobium medicae (strain WSM419) (Ensifer medicae).